Here is a 307-residue protein sequence, read N- to C-terminus: Type 2A encapsulin shell protein (307 aa).

Belongs to the encapsulin family. Family 2A subfamily. In terms of assembly, homooligomeric. The encapsulin nanocompartment is formed by 60 subunits; monomers form pentamers which assemble to form shells. There are 12 charged pores where the pentamers meet as well as 3-fold axis channels and dimer channels. Post-translationally, the N-terminus is blocked.

Its subcellular location is the encapsulin nanocompartment. It localises to the cytoplasm. It is found in the cytosol. The protein localises to the cell membrane. Shell component of a type 2A encapsulin nanocompartment. Forms encapsulin nanocompartments about 24 nm in diameter from 60 monomers. Probably encapsulates at least cysteine desulfurase (CyD, AC O32975) and allows passage of cysteine into its interior, probably involved in sulfur metabolism. Expression in M.smegmatis generates a multimeric protein, whereas expression in E.coli does not. The chain is Type 2A encapsulin shell protein from Mycobacterium leprae (strain TN).